Consider the following 96-residue polypeptide: NADH-ubiquinone oxidoreductase chain 4L (96 aa).

Transmembrane regions (helical) follow at residues 1 to 21 (MNPT…AFYQ), 24 to 44 (LLSL…LMAI), and 57 to 77 (LPLI…VLLV).

It belongs to the complex I subunit 4L family.

The protein localises to the mitochondrion membrane. The catalysed reaction is a ubiquinone + NADH + 5 H(+)(in) = a ubiquinol + NAD(+) + 4 H(+)(out). In terms of biological role, core subunit of the mitochondrial membrane respiratory chain NADH dehydrogenase (Complex I) which catalyzes electron transfer from NADH through the respiratory chain, using ubiquinone as an electron acceptor. Part of the enzyme membrane arm which is embedded in the lipid bilayer and involved in proton translocation. The polypeptide is NADH-ubiquinone oxidoreductase chain 4L (MT-ND4L) (Myxine glutinosa (Atlantic hagfish)).